The following is a 451-amino-acid chain: AP-4 complex subunit mu (451 aa).

Residues 184 to 450 (REEIFVDIIE…VTQANSYVAR (267 aa)) enclose the MHD domain.

Belongs to the adaptor complexes medium subunit family. Adaptor protein complex 4 (AP-4) is a heterotetramer composed of two large adaptins (epsilon-type subunit and beta-type subunit), a medium adaptin (mu-type subunit) and a small adaptin (sigma-type subunit).

The protein resides in the golgi apparatus. The protein localises to the trans-Golgi network. It is found in the membrane. Its subcellular location is the coated pit. In terms of biological role, subunit of novel type of clathrin- or non-clathrin-associated protein coat involved in targeting proteins from the trans-Golgi network (TGN) to the endosomal-lysosomal system. This is AP-4 complex subunit mu (AP4M) from Arabidopsis thaliana (Mouse-ear cress).